The primary structure comprises 304 residues: Homoserine kinase (304 aa).

90–100 (PLARGLGSSAS) is a binding site for ATP.

It belongs to the GHMP kinase family. Homoserine kinase subfamily.

The protein resides in the cytoplasm. It carries out the reaction L-homoserine + ATP = O-phospho-L-homoserine + ADP + H(+). It functions in the pathway amino-acid biosynthesis; L-threonine biosynthesis; L-threonine from L-aspartate: step 4/5. Its function is as follows. Catalyzes the ATP-dependent phosphorylation of L-homoserine to L-homoserine phosphate. This Staphylococcus aureus (strain MRSA252) protein is Homoserine kinase.